We begin with the raw amino-acid sequence, 306 residues long: D-alanine--D-alanine ligase (306 aa).

Positions 107–300 (KAAYRTAGLP…FGQLCAWLVE (194 aa)) constitute an ATP-grasp domain. Position 134–184 (134–184 (IAPPYVVKPNNEGSSVGIYIVHEATNSPPQLSEEMPAQVMVEAYAPGREMT)) interacts with ATP. Mg(2+) is bound by residues Asp-251, Glu-267, and Asn-269.

Belongs to the D-alanine--D-alanine ligase family. Mg(2+) is required as a cofactor. The cofactor is Mn(2+).

Its subcellular location is the cytoplasm. The catalysed reaction is 2 D-alanine + ATP = D-alanyl-D-alanine + ADP + phosphate + H(+). Its pathway is cell wall biogenesis; peptidoglycan biosynthesis. Functionally, cell wall formation. The polypeptide is D-alanine--D-alanine ligase (Ruegeria sp. (strain TM1040) (Silicibacter sp.)).